A 337-amino-acid chain; its full sequence is UDP-3-O-acylglucosamine N-acyltransferase (337 aa).

The Proton acceptor role is filled by His238.

It belongs to the transferase hexapeptide repeat family. LpxD subfamily. As to quaternary structure, homotrimer.

It carries out the reaction a UDP-3-O-[(3R)-3-hydroxyacyl]-alpha-D-glucosamine + a (3R)-hydroxyacyl-[ACP] = a UDP-2-N,3-O-bis[(3R)-3-hydroxyacyl]-alpha-D-glucosamine + holo-[ACP] + H(+). Its pathway is bacterial outer membrane biogenesis; LPS lipid A biosynthesis. Functionally, catalyzes the N-acylation of UDP-3-O-acylglucosamine using 3-hydroxyacyl-ACP as the acyl donor. Is involved in the biosynthesis of lipid A, a phosphorylated glycolipid that anchors the lipopolysaccharide to the outer membrane of the cell. This is UDP-3-O-acylglucosamine N-acyltransferase from Xanthomonas campestris pv. campestris (strain 8004).